Here is a 318-residue protein sequence, read N- to C-terminus: Mechanosensory protein 3 (318 aa).

LIM zinc-binding domains are found at residues 27 to 86 and 87 to 152; these read NKCY…DYSA and HRCA…PMDD. The segment at residues 214 to 273 is a DNA-binding region (homeobox); that stretch reads RRGPRTTIRQNQLDVLNEMFSNTPKPSKHARAKLALETGLSMRVIQVWFQNRRSKERRLK.

It localises to the nucleus. Its function is as follows. Specifies differentiation of the set of six touch receptor neurons. Binds cooperatively as a heterodimer with unc-86 to sites in the mec-3 gene promoter. This is Mechanosensory protein 3 (mec-3) from Caenorhabditis briggsae.